The following is a 437-amino-acid chain: GTPase Der (437 aa).

EngA-type G domains follow at residues 2-167 and 180-356; these read ATVL…EKKG and IRVA…NSLF. GTP is bound by residues 8–15, 55–59, 118–121, 186–193, 233–237, and 299–302; these read GKSNVGKS, DTCGI, NKSE, GRPNAGKS, DTAGL, and NKID. Residues 357–437 form the KH-like domain; the sequence is YRVQTSAVNA…PIFLKFKNRH (81 aa).

It belongs to the TRAFAC class TrmE-Era-EngA-EngB-Septin-like GTPase superfamily. EngA (Der) GTPase family. As to quaternary structure, associates with the 50S ribosomal subunit.

In terms of biological role, GTPase that plays an essential role in the late steps of ribosome biogenesis. In Thermosipho melanesiensis (strain DSM 12029 / CIP 104789 / BI429), this protein is GTPase Der.